The chain runs to 294 residues: Elongation factor Ts (294 aa).

The segment at 80–83 (TDFV) is involved in Mg(2+) ion dislocation from EF-Tu.

The protein belongs to the EF-Ts family.

The protein localises to the cytoplasm. Associates with the EF-Tu.GDP complex and induces the exchange of GDP to GTP. It remains bound to the aminoacyl-tRNA.EF-Tu.GTP complex up to the GTP hydrolysis stage on the ribosome. This Listeria monocytogenes serovar 1/2a (strain ATCC BAA-679 / EGD-e) protein is Elongation factor Ts.